The sequence spans 460 residues: MTNYAIILAAGKGTRMTSDLPKVLHKVSGLTMLEHVFRSVKAISPEKSVTVIGHKSEMVRAVLADQSAFVHQTEQLGTGHAVMMAETQLEGLEGHTLVIAGDTPLITGESLKSLIDFHVNHKNVATILTATAQDPFGYGRIVRNKDGEVIKIVEQKDANEYEQQLKEINTGTYVFDNKRLFEALKCITTNNAQGEYYLTDVVAIFRANKEKVGAYILRDFNESLGVNDRVALAIAETVMRQRITQKHMVNGVTFQNPETVYIESDVEIAPDVLIEGNVTLKGRTHIGSGTVLTNGTYIVDSEIGDNCVVTNSMIESSVLAAGVTVGPYAHLRPGTTLDREVHIGNFVEVKGSHIGEKTKAGHLTYIGNAQVGSSVNVGAGTITVNYDGQNKYETVIGDHAFIGSNSTLIAPLEVGDHALTAAGSTISKTVPIDSIAIGRSRQVTKEGYAKRLAHHPSRSK.

The interval 1 to 229 (MTNYAIILAA…FNESLGVNDR (229 aa)) is pyrophosphorylase. Residues 8–11 (LAAG), K22, Q72, and 77–78 (GT) each bind UDP-N-acetyl-alpha-D-glucosamine. Position 102 (D102) interacts with Mg(2+). Positions 139, 154, 169, and 227 each coordinate UDP-N-acetyl-alpha-D-glucosamine. N227 is a binding site for Mg(2+). The segment at 230-250 (VALAIAETVMRQRITQKHMVN) is linker. The tract at residues 251 to 460 (GVTFQNPETV…RLAHHPSRSK (210 aa)) is N-acetyltransferase. UDP-N-acetyl-alpha-D-glucosamine-binding residues include R332 and K350. The active-site Proton acceptor is H362. The UDP-N-acetyl-alpha-D-glucosamine site is built by Y365 and N376. Acetyl-CoA-binding positions include A379, 385–386 (NY), S404, A422, and R439.

This sequence in the N-terminal section; belongs to the N-acetylglucosamine-1-phosphate uridyltransferase family. The protein in the C-terminal section; belongs to the transferase hexapeptide repeat family. Homotrimer. Requires Mg(2+) as cofactor.

The protein localises to the cytoplasm. The catalysed reaction is alpha-D-glucosamine 1-phosphate + acetyl-CoA = N-acetyl-alpha-D-glucosamine 1-phosphate + CoA + H(+). The enzyme catalyses N-acetyl-alpha-D-glucosamine 1-phosphate + UTP + H(+) = UDP-N-acetyl-alpha-D-glucosamine + diphosphate. It functions in the pathway nucleotide-sugar biosynthesis; UDP-N-acetyl-alpha-D-glucosamine biosynthesis; N-acetyl-alpha-D-glucosamine 1-phosphate from alpha-D-glucosamine 6-phosphate (route II): step 2/2. The protein operates within nucleotide-sugar biosynthesis; UDP-N-acetyl-alpha-D-glucosamine biosynthesis; UDP-N-acetyl-alpha-D-glucosamine from N-acetyl-alpha-D-glucosamine 1-phosphate: step 1/1. Its pathway is bacterial outer membrane biogenesis; LPS lipid A biosynthesis. In terms of biological role, catalyzes the last two sequential reactions in the de novo biosynthetic pathway for UDP-N-acetylglucosamine (UDP-GlcNAc). The C-terminal domain catalyzes the transfer of acetyl group from acetyl coenzyme A to glucosamine-1-phosphate (GlcN-1-P) to produce N-acetylglucosamine-1-phosphate (GlcNAc-1-P), which is converted into UDP-GlcNAc by the transfer of uridine 5-monophosphate (from uridine 5-triphosphate), a reaction catalyzed by the N-terminal domain. The sequence is that of Bifunctional protein GlmU from Streptococcus pyogenes serotype M1.